The sequence spans 159 residues: 3-hydroxyacyl-[acyl-carrier-protein] dehydratase FabZ (159 aa).

His58 is a catalytic residue.

The protein belongs to the thioester dehydratase family. FabZ subfamily.

Its subcellular location is the cytoplasm. The catalysed reaction is a (3R)-hydroxyacyl-[ACP] = a (2E)-enoyl-[ACP] + H2O. Involved in unsaturated fatty acids biosynthesis. Catalyzes the dehydration of short chain beta-hydroxyacyl-ACPs and long chain saturated and unsaturated beta-hydroxyacyl-ACPs. In Helicobacter pylori (strain P12), this protein is 3-hydroxyacyl-[acyl-carrier-protein] dehydratase FabZ.